Consider the following 299-residue polypeptide: MAATGGGADDESRSGRSSSDGECAVAPEPLAEAGGLVSFADFGVSLGSGAGLPGRSVGRAQSSLRYLQVLWQQDVEPRDELRCKIPAGRLRRAARPHRRLGPTGKEVHALKRLRDSANANDVETVQQLLEDGADPCAADDKGRTALHFASCNGNDQIVQLLLDHGADPNQQDGLGNTPLHLAACTNHVPVITTLLRGGARVDALDRAGRTPLHLAKSKLNILQEGHSQCLEAVRLEVKQIIHMLREYLERLGRHEQRERLDDLCTRLQMTSTKEQVDEVTDLLASFTSLSLQMQSMEKR.

The interval 1 to 27 is disordered; the sequence is MAATGGGADDESRSGRSSSDGECAVAP. Residue Ala-2 is modified to N-acetylalanine. Ser-62 carries the post-translational modification Phosphoserine. Residues 98 to 116 carry the Nuclear localization signal (NLS) motif; it reads RRLGPTGKEVHALKRLRDS. 4 ANK repeats span residues 108-137, 141-170, 174-203, and 207-239; these read HALK…DPCA, KGRT…DPNQ, LGNT…RVDA, and AGRT…EVKQ. The interval 140 to 240 is LYN-binding; the sequence is DKGRTALHFA…EAVRLEVKQI (101 aa). Positions 282–292 match the Nuclear export signal (NES) motif; the sequence is LLASFTSLSLQ.

Interacts (via ankyrin repeat region) with LYN (via SH3-domain) in an activation-independent status of LYN. Forms a multiprotein complex with LYN and HCLS1. Interacts with TSN2, VAV1, DBNL and LASP1. Expressed in a variety of hemopoietic cell lines and tissue with high levels in testis. Highly expressed in ciliated cells.

Its subcellular location is the nucleus. It localises to the cytoplasm. The protein resides in the midbody. Functionally, plays an important role in regulating intracellular signaling events associated with erythroid terminal differentiation. The protein is Ankyrin repeat domain-containing protein 54 (Ankrd54) of Mus musculus (Mouse).